Reading from the N-terminus, the 267-residue chain is Diaminopimelate epimerase (267 aa).

Asn15 and Asn66 together coordinate substrate. The active-site Proton donor is Cys75. Substrate-binding positions include 76-77 (GN), Asn150, Asn183, and 201-202 (ER). Residue Cys210 is the Proton acceptor of the active site. Residue 211–212 (GT) coordinates substrate.

Belongs to the diaminopimelate epimerase family. In terms of assembly, homodimer.

It localises to the cytoplasm. The enzyme catalyses (2S,6S)-2,6-diaminopimelate = meso-2,6-diaminopimelate. The protein operates within amino-acid biosynthesis; L-lysine biosynthesis via DAP pathway; DL-2,6-diaminopimelate from LL-2,6-diaminopimelate: step 1/1. In terms of biological role, catalyzes the stereoinversion of LL-2,6-diaminopimelate (L,L-DAP) to meso-diaminopimelate (meso-DAP), a precursor of L-lysine and an essential component of the bacterial peptidoglycan. This chain is Diaminopimelate epimerase, found in Bacteroides thetaiotaomicron (strain ATCC 29148 / DSM 2079 / JCM 5827 / CCUG 10774 / NCTC 10582 / VPI-5482 / E50).